Consider the following 621-residue polypeptide: Probable potassium transport system protein Kup 2 (621 aa).

12 consecutive transmembrane segments (helical) span residues 12 to 32 (ITVA…LYAL), 52 to 72 (VLSL…VAII), 101 to 121 (WIIT…SMIT), 138 to 158 (PDLK…LFFI), 166 to 186 (VGKL…ILGL), 213 to 233 (GLAF…EALY), 249 to 269 (FGFV…LLLI), 286 to 306 (ALIP…QAVI), 338 to 358 (IYVP…VIGF), 370 to 390 (IAVT…MVLM), 396 to 416 (LLVA…FAAN), and 420 to 440 (IPEG…VLTT).

This sequence belongs to the HAK/KUP transporter (TC 2.A.72) family.

It is found in the cell inner membrane. It carries out the reaction K(+)(in) + H(+)(in) = K(+)(out) + H(+)(out). In terms of biological role, transport of potassium into the cell. Likely operates as a K(+):H(+) symporter. The chain is Probable potassium transport system protein Kup 2 from Dechloromonas aromatica (strain RCB).